A 302-amino-acid chain; its full sequence is Sulfate adenylyltransferase subunit 2 (302 aa).

Belongs to the PAPS reductase family. CysD subfamily. Heterodimer composed of CysD, the smaller subunit, and CysN.

The catalysed reaction is sulfate + ATP + H(+) = adenosine 5'-phosphosulfate + diphosphate. It participates in sulfur metabolism; hydrogen sulfide biosynthesis; sulfite from sulfate: step 1/3. Its function is as follows. With CysN forms the ATP sulfurylase (ATPS) that catalyzes the adenylation of sulfate producing adenosine 5'-phosphosulfate (APS) and diphosphate, the first enzymatic step in sulfur assimilation pathway. APS synthesis involves the formation of a high-energy phosphoric-sulfuric acid anhydride bond driven by GTP hydrolysis by CysN coupled to ATP hydrolysis by CysD. In Photorhabdus laumondii subsp. laumondii (strain DSM 15139 / CIP 105565 / TT01) (Photorhabdus luminescens subsp. laumondii), this protein is Sulfate adenylyltransferase subunit 2.